The chain runs to 150 residues: Large ribosomal subunit protein bL9 (150 aa).

It belongs to the bacterial ribosomal protein bL9 family.

Binds to the 23S rRNA. The protein is Large ribosomal subunit protein bL9 of Leuconostoc citreum (strain KM20).